Reading from the N-terminus, the 175-residue chain is Nucleoside diphosphate kinase 6 (175 aa).

Residues Lys8, Phe57, Arg85, Thr91, Arg105, and Asn115 each contribute to the ATP site. His118 functions as the Pros-phosphohistidine intermediate in the catalytic mechanism.

The protein belongs to the NDK family. Requires Mg(2+) as cofactor.

The catalysed reaction is a 2'-deoxyribonucleoside 5'-diphosphate + ATP = a 2'-deoxyribonucleoside 5'-triphosphate + ADP. It catalyses the reaction a ribonucleoside 5'-diphosphate + ATP = a ribonucleoside 5'-triphosphate + ADP. Its function is as follows. Major role in the synthesis of nucleoside triphosphates other than ATP. The ATP gamma phosphate is transferred to the NDP beta phosphate via a ping-pong mechanism, using a phosphorylated active-site intermediate. The protein is Nucleoside diphosphate kinase 6 (Nme6) of Rattus norvegicus (Rat).